We begin with the raw amino-acid sequence, 91 residues long: Acylphosphatase (91 aa).

The region spanning 3-91 (CLKAVVKGKV…GNYGDFHIKY (89 aa)) is the Acylphosphatase-like domain. Residues arginine 18 and asparagine 36 contribute to the active site.

This sequence belongs to the acylphosphatase family.

The enzyme catalyses an acyl phosphate + H2O = a carboxylate + phosphate + H(+). In Dehalococcoides mccartyi (strain ATCC BAA-2266 / KCTC 15142 / 195) (Dehalococcoides ethenogenes (strain 195)), this protein is Acylphosphatase (acyP).